The following is a 21-amino-acid chain: METFCYMKWPVRHHKSRRVSH.

The polypeptide is Protein YliM (Escherichia coli (strain K12)).